A 756-amino-acid chain; its full sequence is Phosphate transporter PHO1 homolog 6 (756 aa).

One can recognise an SPX domain in the interval 1 to 303 (MKFGKDFSSE…SRDAAKSYMK (303 aa)). The Cytoplasmic segment spans residues 1–355 (MKFGKDFSSE…KPKRERHRLT (355 aa)). The helical transmembrane segment at 356 to 376 (FSTGFLGGCMFSLIVALVAIV) threads the bilayer. Topologically, residues 377–396 (RTRNILQDDGQKQYMNTMFP) are extracellular. The helical transmembrane segment at 397–417 (LYSLFGFIMLHMTMYAANIYF) threads the bilayer. The Cytoplasmic segment spans residues 418 to 440 (WRQYRVNYSFIFGFKQGTELGYK). The chain crosses the membrane as a helical span at residues 441–461 (QVLFVGFSIGALALLCVLANL). The Extracellular portion of the chain corresponds to 462–477 (DMETDPKTKDYQALTE). A helical membrane pass occupies residues 478–498 (LLPLFLLIAMFVVLVVPFNIF). At 499–631 (YRSSRFFFLT…DEKDRQIIWR (133 aa)) the chain is on the cytoplasmic side. Residues 562 to 756 (KDSQVFNTFL…SLPFNYEVDH (195 aa)) enclose the EXS domain. The chain crosses the membrane as a helical span at residues 632 to 652 (LLGGITSAMAVVFCTYWDLVY). Topologically, residues 653 to 676 (DWGLLNRTSKNPWLRDNLLIPHKE) are extracellular. The helical transmembrane segment at 677 to 697 (VYVLAMILNVVLRFAWMQTVL) threads the bilayer. The Cytoplasmic segment spans residues 698 to 756 (DFKFESIHTQTVVAVVASLEIIRRGIWNFFRLENEHLNNVGKYRAFKAVSLPFNYEVDH).

The protein belongs to the SYG1 (TC 2.A.94) family. Specifically expressed in anther connective tissue.

The protein localises to the cell membrane. Its function is as follows. May transport inorganic phosphate (Pi). The sequence is that of Phosphate transporter PHO1 homolog 6 (PHO1-H6) from Arabidopsis thaliana (Mouse-ear cress).